We begin with the raw amino-acid sequence, 254 residues long: Tryptophan synthase alpha chain (254 aa).

Residues E48 and D59 each act as proton acceptor in the active site.

It belongs to the TrpA family. In terms of assembly, tetramer of two alpha and two beta chains.

It carries out the reaction (1S,2R)-1-C-(indol-3-yl)glycerol 3-phosphate + L-serine = D-glyceraldehyde 3-phosphate + L-tryptophan + H2O. The protein operates within amino-acid biosynthesis; L-tryptophan biosynthesis; L-tryptophan from chorismate: step 5/5. The alpha subunit is responsible for the aldol cleavage of indoleglycerol phosphate to indole and glyceraldehyde 3-phosphate. The sequence is that of Tryptophan synthase alpha chain from Desulfotalea psychrophila (strain LSv54 / DSM 12343).